A 152-amino-acid polypeptide reads, in one-letter code: Deoxyuridine 5'-triphosphate nucleotidohydrolase (152 aa).

Substrate is bound by residues 71–73, Asn84, 88–90, and Met98; these read RSG and LID.

It belongs to the dUTPase family. The cofactor is Mg(2+).

The enzyme catalyses dUTP + H2O = dUMP + diphosphate + H(+). It functions in the pathway pyrimidine metabolism; dUMP biosynthesis; dUMP from dCTP (dUTP route): step 2/2. Functionally, this enzyme is involved in nucleotide metabolism: it produces dUMP, the immediate precursor of thymidine nucleotides and it decreases the intracellular concentration of dUTP so that uracil cannot be incorporated into DNA. This chain is Deoxyuridine 5'-triphosphate nucleotidohydrolase, found in Salmonella arizonae (strain ATCC BAA-731 / CDC346-86 / RSK2980).